A 157-amino-acid polypeptide reads, in one-letter code: Large ribosomal subunit protein uL11 (157 aa).

This sequence belongs to the universal ribosomal protein uL11 family.

Its function is as follows. This protein binds directly to 26S ribosomal RNA. The chain is Large ribosomal subunit protein uL11 (RPL12) from Chlamydomonas reinhardtii (Chlamydomonas smithii).